The following is a 714-amino-acid chain: A-kinase anchor protein 5 (714 aa).

2 disordered regions span residues 1–146 and 243–333; these read METS…GYVR and VLEN…VGHT. Residues 1–164 form an essential to the intracellular anchoring function region; the sequence is METSVSEIQI…EIKAQIQPDE (164 aa). Ser-4 and Ser-22 each carry phosphoserine. Over residues 10-32 the composition is skewed to basic and acidic residues; the sequence is IETKDEKRPEAASPQKERQERKT. A lipid anchor (S-palmitoyl cysteine) is attached at Cys-36. Over residues 37–50 the composition is skewed to basic residues; sequence FKRRKKVNKKKAKA. Basic and acidic residues-rich tracts occupy residues 54–63 and 88–100; these read TAEETEKHAP and KPSE…KPSE. The AKAP CaM-binding signature appears at 74–94; the sequence is AGAWASIKRLVTHRKPSESAE. Cys-123 carries S-palmitoyl cysteine lipidation. Residues 243 to 268 are compositionally biased toward polar residues; sequence VLENSAADSPQPVTSTAPLSPATTHQ. The span at 285 to 301 shows a compositional bias: basic and acidic residues; it reads GKDDGRRKTAAEEKKSG. The stretch at 305–312 is one 1; approximate repeat; sequence LGQAEEAS. A 28 X 8 AA repeats of V-G-Q-A-E-E-A-T region spans residues 305–597; that stretch reads LGQAEEASSV…PIVGQAEETV (293 aa). Polar residues predominate over residues 310–323; it reads EASSVSQADKSVLS. One copy of the 2; approximate repeat lies at 322 to 329; that stretch reads LSQAEEAT. A 3; approximate repeat occupies 330-337; sequence VGHTEEAT. The 4; approximate repeat unit spans residues 350–357; sequence LSQAEEAT. The 5; approximate repeat unit spans residues 358-365; the sequence is VAQAKETV. One copy of the 6; approximate repeat lies at 366–373; the sequence is LSQAEEVK. Residues 398-405 form a 7; approximate repeat; it reads VSQAEEAI. Residues 414–421 form an 8; approximate repeat; that stretch reads MGQAEEAT. 5 repeat units span residues 430–437, 438–445, 446–453, 454–461, and 462–469. Residues 470–477 form a 14; approximate repeat; sequence VGQAGEAT. The 15; approximate repeat unit spans residues 486-493; the sequence is VGQAEEAI. 4 tandem repeats follow at residues 494-501, 502-509, 510-517, and 518-525. One copy of the 20; approximate repeat lies at 526 to 533; that stretch reads VDQAEEAT. The stretch at 534-541 is repeat 21; that stretch reads VGQAEEAT. The 22; approximate repeat unit spans residues 542-549; the sequence is VGQAGEAA. A 23; approximate repeat occupies 550–557; the sequence is VGQAEEAI. The 24; approximate repeat unit spans residues 558–565; that stretch reads VAQAEEAT. Repeat unit 25 spans residues 566-573; the sequence is VGQAGEAT. A 26; approximate repeat occupies 574–581; it reads VGQAEKAT. Residues 582–589 form a 27; approximate repeat; that stretch reads VGQAEEPI. The 28; approximate repeat unit spans residues 590-597; sequence VGQAEETV. The RII-beta subunit binding domain stretch occupies residues 675–696; sequence YETLLIETASSLVKNAIELSVE. The tract at residues 697–714 is tethers NFATC2 to CRAC channels; the sequence is QLVNEMVSEDNQINTLFQ.

In terms of assembly, binding protein for dimer of the RII-beta regulatory subunit of cAMP-dependent protein kinase (PKA) and also for the protein kinase C (PKC) and the phosphatase calcineurin (PP2B). Each enzyme is inhibited when bound to the anchoring protein. Also binds the beta2-adrenergic receptor. Part of a complex containing AKAP5, ADCY5, ADCY6 and PDE4C. Interacts with ADCY8, and enhances its phosphorylation at lipid rafts. Interacts with ORAI1 (isoform alpha) (via N-terminus) upon store depletion and in response to LTC4. Does not interact with ORAI2 and ORAI3 paralogs. Interacts (via leucine zipper domain) with NFATC2/NFAT1. Interacts with calmodulin; the interaction is calcium-independent. Interacts with KCNQ2; the interaction may help KCNQ2 channel complex to retain calcium-bound calmodulin. Interacts with KCNK2; the channel is recruited to postsynaptic microdomains by AKAP5 where it can integrate neurotransmitter receptor signals. Part of a complex composed of AKAP5 and ADRB2. Post-translationally, palmitoylated. Palmitoylation at Cys-36 and Cys-123 plays a key role in the targeting of AKAP5 to lipid rafts. Palmitoylation by ZDHHC2 is required for AKAP5 function in LTP-stimulated recycling endosome exocytosis.

It is found in the postsynaptic recycling endosome membrane. It localises to the cell projection. The protein localises to the dendrite. The protein resides in the postsynaptic cell membrane. Its function is as follows. Multivalent scaffold protein that anchors the cAMP-dependent protein kinase/PKA to cytoskeletal and/or organelle-associated proteins, targeting the signal carried by cAMP to specific intracellular effectors. Association with the beta2-adrenergic receptor (beta2-AR) not only regulates beta2-AR signaling pathway, but also the activation by PKA by switching off the beta2-AR signaling cascade. Plays a role in long term synaptic potentiation by regulating protein trafficking from the dendritic recycling endosomes to the plasma membrane and controlling both structural and functional plasticity at excitatory synapses. In hippocampal pyramidal neurons, recruits KCNK2/TREK-1 channel at postsynaptic dense bodies microdomains and converts it to a leak channel no longer sensitive to stimulation by arachidonic acid, acidic pH or mechanical stress, nor inhibited by Gq-coupled receptors but still under the negative control of Gs-coupled receptors. Associates with ORAI1 pore-forming subunit of CRAC channels in Ca(2+) signaling microdomains where it recruits NFATC2/NFAT1 and couples store-operated Ca(2+) influx to calmodulin and calcineurin signaling and activation of NFAT-dependent transcriptional responses. This is A-kinase anchor protein 5 (Akap5) from Rattus norvegicus (Rat).